A 182-amino-acid chain; its full sequence is Methionine-R-sulfoxide reductase B2, mitochondrial (182 aa).

Residues 1 to 20 (MARLLWLLRGLTLGTAPRRA) constitute a mitochondrion transit peptide. The 130-residue stretch at 51 to 180 (KSEWQKKLTP…NSVALKFKPR (130 aa)) folds into the MsrB domain. 4 residues coordinate Zn(2+): C90, C93, C146, and C149. C169 serves as the catalytic Nucleophile.

The protein belongs to the MsrB Met sulfoxide reductase family. In terms of assembly, interacts with DAOA; the interaction is direct. Requires Zn(2+) as cofactor. Ubiquitous. Detected in retina, ocular ciliary body, skeletal muscle, heart, colon, bone marrow, cerebellum, small intestine, fetal brain, fetal liver, kidney, spinal cord, lung, placenta and prostate.

Its subcellular location is the mitochondrion. It carries out the reaction L-methionyl-[protein] + [thioredoxin]-disulfide + H2O = L-methionyl-(R)-S-oxide-[protein] + [thioredoxin]-dithiol. The enzyme catalyses [thioredoxin]-disulfide + L-methionine + H2O = L-methionine (R)-S-oxide + [thioredoxin]-dithiol. In terms of biological role, methionine-sulfoxide reductase that specifically reduces methionine (R)-sulfoxide back to methionine. While in many cases, methionine oxidation is the result of random oxidation following oxidative stress, methionine oxidation is also a post-translational modification that takes place on specific residue. Upon oxidative stress, may play a role in the preservation of mitochondrial integrity by decreasing the intracellular reactive oxygen species build-up through its scavenging role, hence contributing to cell survival and protein maintenance. The polypeptide is Methionine-R-sulfoxide reductase B2, mitochondrial (MSRB2) (Homo sapiens (Human)).